The chain runs to 339 residues: Uroporphyrinogen decarboxylase (339 aa).

Substrate-binding positions include 21–25 (RQAGR), aspartate 71, tyrosine 147, serine 202, and histidine 315.

It belongs to the uroporphyrinogen decarboxylase family. In terms of assembly, homodimer.

The protein resides in the cytoplasm. It carries out the reaction uroporphyrinogen III + 4 H(+) = coproporphyrinogen III + 4 CO2. The protein operates within porphyrin-containing compound metabolism; protoporphyrin-IX biosynthesis; coproporphyrinogen-III from 5-aminolevulinate: step 4/4. Its function is as follows. Catalyzes the decarboxylation of four acetate groups of uroporphyrinogen-III to yield coproporphyrinogen-III. The chain is Uroporphyrinogen decarboxylase from Helicobacter pylori (strain HPAG1).